The sequence spans 75 residues: Protein CYSTEINE-RICH TRANSMEMBRANE MODULE 5 (75 aa).

Positions 1 to 29 (MSQYSQNQYAGAYPTPPVSTGPYVAPPPL) are disordered. The span at 14–29 (PTPPVSTGPYVAPPPL) shows a compositional bias: pro residues. Residues 52-69 (AADGFLKGCLATMLACCV) form a helical membrane-spanning segment.

Belongs to the CYSTM1 family. Heterodimers. Interacts with CYSTM7 and WIH1/CYSTM13. Mostly expressed in roots, stems, rosette leaves and siliques and, to a lower extent, in flowers and cauline leaves.

It localises to the cell membrane. It is found in the nucleus. In terms of biological role, involved in resistance to abiotic stress. This Arabidopsis thaliana (Mouse-ear cress) protein is Protein CYSTEINE-RICH TRANSMEMBRANE MODULE 5.